The primary structure comprises 122 residues: MARIAGVDLPRDKRIEVSLTYIFGIGRSSSRKILTDAGINPDTRVKDLTEEEVSKLREIIEKEYHVEGDLRRQVNMDIKRLMDLGCYRGIRHRRGLPVRGQNTKTNARTRKGPKRTAGGKKK.

The segment at 93–122 (RRGLPVRGQNTKTNARTRKGPKRTAGGKKK) is disordered. The segment covering 107-122 (ARTRKGPKRTAGGKKK) has biased composition (basic residues).

This sequence belongs to the universal ribosomal protein uS13 family. Part of the 30S ribosomal subunit. Forms a loose heterodimer with protein S19. Forms two bridges to the 50S subunit in the 70S ribosome.

Located at the top of the head of the 30S subunit, it contacts several helices of the 16S rRNA. In the 70S ribosome it contacts the 23S rRNA (bridge B1a) and protein L5 of the 50S subunit (bridge B1b), connecting the 2 subunits; these bridges are implicated in subunit movement. Contacts the tRNAs in the A and P-sites. The protein is Small ribosomal subunit protein uS13 of Syntrophomonas wolfei subsp. wolfei (strain DSM 2245B / Goettingen).